A 174-amino-acid polypeptide reads, in one-letter code: Ribosome maturation factor RimM (174 aa).

A PRC barrel domain is found at 99 to 172; sequence ADEFFYHDVI…RLVIRPIAGL (74 aa).

This sequence belongs to the RimM family. Binds ribosomal protein uS19.

The protein resides in the cytoplasm. In terms of biological role, an accessory protein needed during the final step in the assembly of 30S ribosomal subunit, possibly for assembly of the head region. Essential for efficient processing of 16S rRNA. May be needed both before and after RbfA during the maturation of 16S rRNA. It has affinity for free ribosomal 30S subunits but not for 70S ribosomes. The polypeptide is Ribosome maturation factor RimM (Chloroflexus aurantiacus (strain ATCC 29366 / DSM 635 / J-10-fl)).